Reading from the N-terminus, the 37-residue chain is GKFSVFGKILRSIAKVFKGVGKVRKQFKTASDLDKNQ.

In terms of tissue distribution, expressed by the venom gland.

The protein localises to the secreted. Disrupts biological membranes, particularly those rich in phosphocholine. Has antimicrobial activity against Gram-negative bacterium E.coli, Gram-positive bacteria B.subtilis and S.aureus, and hemolytic activity against sheep, pig and guinea pig red blood cells. Has insecticidal activity against S.frugiperda ovarian cells by opening non-selective ion channels. Enhances the insecticidal activity of spider venom neurotoxic peptides. The chain is M-oxotoxin-Ot2a from Oxyopes takobius (Lynx spider).